The primary structure comprises 412 residues: MAGSAPEGTQFDARQFDQKLNEVLEGQDEFFTSYDDVHESFDAMGLQENLLRGIYAYGFEKPSAIQQRGIVPFCKGLDVIQQAQSGTGKTATFCSGVLQQLDFSLIQCQALVLAPTRELAQQIEKVMRALGDYLGVKVHACVGGTSVREDQRILQAGVHVVVGTPGRVFDMLKRQSLRADNIKMFVLDEADEMLSRGFKDQIYDIFQLLPPKIQVGVFSATMPPEALEITRKFMSKPVRILVKRDELTLEGIKQFYVNVEKEEWKLETLCDLYETLAITQSVIFVNTRRKVDWLTDKMRSRDHTVSATHGDMDQNTRDIIMREFRSGSSRVLITTDLLARGIDVQQVSLVINFDLPTQPENYLHRIGRSGRFGRKGVAINFVTRDDERMLFDIQKFYNVVVEELPSNVADLL.

A2 is modified (N-acetylalanine). Positions 39-67 (ESFDAMGLQENLLRGIYAYGFEKPSAIQQ) match the Q motif motif. The 171-residue stretch at 70–240 (IVPFCKGLDV…RKFMSKPVRI (171 aa)) folds into the Helicase ATP-binding domain. 83–90 (AQSGTGKT) contacts ATP. Position 104 is a phosphoserine (S104). T145 is modified (phosphothreonine). The DEAD box signature appears at 188 to 191 (DEAD). Residues 251–412 (GIKQFYVNVE…ELPSNVADLL (162 aa)) form the Helicase C-terminal domain.

Belongs to the DEAD box helicase family. eIF4A subfamily. EIF4F is a multi-subunit complex, the composition of which varies with external and internal environmental conditions. It is composed of at least EIF4A, EIF4E and EIF4G. Interacts with CDKA-1. Interacts with MRF1, MRF2, MRF3/ECIP1 and MRF4. Highly expressed in the whole plant.

The protein localises to the cytoplasm. The catalysed reaction is ATP + H2O = ADP + phosphate + H(+). Its function is as follows. ATP-dependent RNA helicase which is a subunit of the eIF4F complex involved in cap recognition and is required for mRNA binding to ribosome. In the current model of translation initiation, eIF4A unwinds RNA secondary structures in the 5'-UTR of mRNAs which is necessary to allow efficient binding of the small ribosomal subunit, and subsequent scanning for the initiator codon. This Arabidopsis thaliana (Mouse-ear cress) protein is Eukaryotic initiation factor 4A-1.